Reading from the N-terminus, the 1167-residue chain is ATP-dependent helicase/deoxyribonuclease subunit B (1167 aa).

The 359-residue stretch at 1–359 folds into the UvrD-like helicase ATP-binding domain; it reads MSLRFLLGRS…IRQTEAYRDL (359 aa). 8–15 serves as a coordination point for ATP; it reads GRSGSGKT. Residues 282–588 form the UvrD-like helicase C-terminal domain; the sequence is ANRRHEDRAL…EFSLVPPAMD (307 aa). Residues Cys804, Cys1126, Cys1129, and Cys1135 each contribute to the [4Fe-4S] cluster site.

This sequence belongs to the helicase family. AddB/RexB type 1 subfamily. In terms of assembly, heterodimer of AddA and AddB. It depends on Mg(2+) as a cofactor. [4Fe-4S] cluster serves as cofactor.

Functionally, the heterodimer acts as both an ATP-dependent DNA helicase and an ATP-dependent, dual-direction single-stranded exonuclease. Recognizes the chi site generating a DNA molecule suitable for the initiation of homologous recombination. The AddB subunit has 5' -&gt; 3' nuclease activity but not helicase activity. This chain is ATP-dependent helicase/deoxyribonuclease subunit B, found in Geobacillus kaustophilus (strain HTA426).